The chain runs to 422 residues: Serine--tRNA ligase (422 aa).

226-228 (TSE) serves as a coordination point for L-serine. Residues 257–259 (RRE) and valine 273 each bind ATP. Glutamate 280 provides a ligand contact to L-serine. An ATP-binding site is contributed by 344 to 347 (ELTS). Threonine 379 contacts L-serine.

This sequence belongs to the class-II aminoacyl-tRNA synthetase family. Type-1 seryl-tRNA synthetase subfamily. In terms of assembly, homodimer. The tRNA molecule binds across the dimer.

The protein resides in the cytoplasm. It carries out the reaction tRNA(Ser) + L-serine + ATP = L-seryl-tRNA(Ser) + AMP + diphosphate + H(+). The enzyme catalyses tRNA(Sec) + L-serine + ATP = L-seryl-tRNA(Sec) + AMP + diphosphate + H(+). It participates in aminoacyl-tRNA biosynthesis; selenocysteinyl-tRNA(Sec) biosynthesis; L-seryl-tRNA(Sec) from L-serine and tRNA(Sec): step 1/1. Functionally, catalyzes the attachment of serine to tRNA(Ser). Is also able to aminoacylate tRNA(Sec) with serine, to form the misacylated tRNA L-seryl-tRNA(Sec), which will be further converted into selenocysteinyl-tRNA(Sec). This chain is Serine--tRNA ligase, found in Corynebacterium glutamicum (strain ATCC 13032 / DSM 20300 / JCM 1318 / BCRC 11384 / CCUG 27702 / LMG 3730 / NBRC 12168 / NCIMB 10025 / NRRL B-2784 / 534).